Reading from the N-terminus, the 266-residue chain is uncharacterized protein (266 aa).

Transmembrane regions (helical) follow at residues 9-29 (IFIIFLSFLMIVLSITSIELP), 79-99 (GIMTCMGINILSLVIILINPF), 122-142 (LSVMIVIFYILSTTIGLMLSG), and 193-213 (GWYLSIVLLFLSLILAVMVFI).

It localises to the membrane. This is an uncharacterized protein from Dictyostelium discoideum (Social amoeba).